A 413-amino-acid polypeptide reads, in one-letter code: DNA primase large subunit PriL (413 aa).

The [4Fe-4S] cluster site is built by Cys-230, Cys-301, Cys-310, and Cys-317. Composition is skewed to basic and acidic residues over residues 340-356, 362-381, and 388-413; these read MEKEKEEKEEKEKQEEK, KEKQEEIKKKKKKEKQEEKG, and KKRERKQEKETKRREGKEKQEEKKRI. The tract at residues 340 to 413 is disordered; it reads MEKEKEEKEE…KEKQEEKKRI (74 aa).

It belongs to the eukaryotic-type primase large subunit family. As to quaternary structure, heterodimer of a small subunit (PriS) and a large subunit (PriL). Requires [4Fe-4S] cluster as cofactor.

Functionally, regulatory subunit of DNA primase, an RNA polymerase that catalyzes the synthesis of short RNA molecules used as primers for DNA polymerase during DNA replication. Stabilizes and modulates the activity of the small subunit, increasing the rate of DNA synthesis, and conferring RNA synthesis capability. The DNA polymerase activity may enable DNA primase to also catalyze primer extension after primer synthesis. May also play a role in DNA repair. The protein is DNA primase large subunit PriL of Methanosarcina barkeri (strain Fusaro / DSM 804).